Reading from the N-terminus, the 197-residue chain is ATP-dependent Clp protease proteolytic subunit (197 aa).

The active-site Nucleophile is the S98. The active site involves H123.

The protein belongs to the peptidase S14 family. As to quaternary structure, fourteen ClpP subunits assemble into 2 heptameric rings which stack back to back to give a disk-like structure with a central cavity, resembling the structure of eukaryotic proteasomes.

The protein resides in the cytoplasm. The catalysed reaction is Hydrolysis of proteins to small peptides in the presence of ATP and magnesium. alpha-casein is the usual test substrate. In the absence of ATP, only oligopeptides shorter than five residues are hydrolyzed (such as succinyl-Leu-Tyr-|-NHMec, and Leu-Tyr-Leu-|-Tyr-Trp, in which cleavage of the -Tyr-|-Leu- and -Tyr-|-Trp bonds also occurs).. Functionally, cleaves peptides in various proteins in a process that requires ATP hydrolysis. Has a chymotrypsin-like activity. Plays a major role in the degradation of misfolded proteins. This chain is ATP-dependent Clp protease proteolytic subunit, found in Limosilactobacillus reuteri (strain DSM 20016) (Lactobacillus reuteri).